The primary structure comprises 259 residues: NAD(P)H-quinone oxidoreductase subunit K 2 (259 aa).

Residues cysteine 52, cysteine 53, cysteine 117, and cysteine 148 each coordinate [4Fe-4S] cluster.

This sequence belongs to the complex I 20 kDa subunit family. As to quaternary structure, NDH-1 can be composed of about 15 different subunits; different subcomplexes with different compositions have been identified which probably have different functions. [4Fe-4S] cluster is required as a cofactor.

It is found in the cellular thylakoid membrane. The catalysed reaction is a plastoquinone + NADH + (n+1) H(+)(in) = a plastoquinol + NAD(+) + n H(+)(out). It catalyses the reaction a plastoquinone + NADPH + (n+1) H(+)(in) = a plastoquinol + NADP(+) + n H(+)(out). Its function is as follows. NDH-1 shuttles electrons from an unknown electron donor, via FMN and iron-sulfur (Fe-S) centers, to quinones in the respiratory and/or the photosynthetic chain. The immediate electron acceptor for the enzyme in this species is believed to be plastoquinone. Couples the redox reaction to proton translocation, and thus conserves the redox energy in a proton gradient. Cyanobacterial NDH-1 also plays a role in inorganic carbon-concentration. This is NAD(P)H-quinone oxidoreductase subunit K 2 (ndhK2) from Cyanothece sp. (strain PCC 7425 / ATCC 29141).